The primary structure comprises 216 residues: Neural cell adhesion molecule L1.2 (216 aa).

Residues 1–64 enclose the Fibronectin type-III domain; sequence EFFIHYLRKD…QTAGARVMEV (64 aa). Residues 1 to 73 are Extracellular-facing; the sequence is EFFIHYLRKD…VKSGFVTESW (73 aa). 2 N-linked (GlcNAc...) asparagine glycosylation sites follow: asparagine 22 and asparagine 46. Residues 74-94 traverse the membrane as a helical segment; the sequence is FIGLISALVLLLLVLLILCFI. At 95–216 the chain is on the cytoplasmic side; the sequence is KRSKGGKYSV…GLPNSAALLD (122 aa). Disordered regions lie at residues 127 to 149 and 173 to 216; these read YRSLESDNEEKRTASQPSLCEDS and DESL…ALLD. Basic and acidic residues predominate over residues 128–139; the sequence is RSLESDNEEKRT.

Belongs to the immunoglobulin superfamily. L1/neurofascin/NgCAM family. Expressed in many postmitotic neurons in 16-36 hours embryos. Little or no expression in the olfactory placode, the anterior lateral line/acoustic ganglia complex, the posterior lateral line ganglion, late-developing hindbrain neurons and some Rohon-Beard cells in the spinal cord.

It is found in the cell membrane. Its subcellular location is the cell projection. The protein resides in the growth cone. Its function is as follows. Cell adhesion molecule with an important role in the development of the nervous system. Involved in neuron-neuron adhesion, neurite fasciculation, outgrowth of neurites, etc. Binds to axonin on neurons. The sequence is that of Neural cell adhesion molecule L1.2 (nadl1.2) from Danio rerio (Zebrafish).